Here is a 212-residue protein sequence, read N- to C-terminus: Large ribosomal subunit protein uL3 (212 aa).

A disordered region spans residues 119-147 (YQGNIKRWGQSRGPETHGSRYHRIPGSMG).

This sequence belongs to the universal ribosomal protein uL3 family. Part of the 50S ribosomal subunit. Forms a cluster with proteins L14 and L19.

Functionally, one of the primary rRNA binding proteins, it binds directly near the 3'-end of the 23S rRNA, where it nucleates assembly of the 50S subunit. The chain is Large ribosomal subunit protein uL3 from Lactobacillus acidophilus (strain ATCC 700396 / NCK56 / N2 / NCFM).